Consider the following 488-residue polypeptide: Glutamyl-tRNA(Gln) amidotransferase subunit A (488 aa).

Residues lysine 77 and serine 152 each act as charge relay system in the active site. The Acyl-ester intermediate role is filled by serine 176.

Belongs to the amidase family. GatA subfamily. As to quaternary structure, heterotrimer of A, B and C subunits.

The catalysed reaction is L-glutamyl-tRNA(Gln) + L-glutamine + ATP + H2O = L-glutaminyl-tRNA(Gln) + L-glutamate + ADP + phosphate + H(+). Allows the formation of correctly charged Gln-tRNA(Gln) through the transamidation of misacylated Glu-tRNA(Gln) in organisms which lack glutaminyl-tRNA synthetase. The reaction takes place in the presence of glutamine and ATP through an activated gamma-phospho-Glu-tRNA(Gln). This is Glutamyl-tRNA(Gln) amidotransferase subunit A from Streptococcus pyogenes serotype M3 (strain ATCC BAA-595 / MGAS315).